Reading from the N-terminus, the 310-residue chain is MTVTVKMLVTKVKLDVVYATDDLLEKEITTSDISRPGLEMTGYFDYYAPERLQLFGMKEWSYLTQMTSHNRYSVLKEMFKKDTPAVIVSRGLAIPEEMVQAAQEEGIALFSSRVSTSRLAGEMSYFLDASLAERTSVHGVLMDIYGMGVLIQGDSGIGKSETGLELVKRGHRLVADDRVDVFAKDEETLWGEPAEILRHLLEIRGVGIIDVMSLYGASAVKDSSQVQLAIYLENFEAGKVFDRLGNGNEEITFSGVSIPRIRIPVKTGRNVSVVIEAAAMNHRAKEMGFDATKTFEERLTRLISKNEEGK.

Active-site residues include His138 and Lys159. ATP is bound at residue 153 to 160; it reads GDSGIGKS. Mg(2+) is bound at residue Ser160. The active-site Proton acceptor; for phosphorylation activity. Proton donor; for dephosphorylation activity is the Asp177. Positions 201-210 are important for the catalytic mechanism of both phosphorylation and dephosphorylation; sequence LEIRGVGIID. Glu202 provides a ligand contact to Mg(2+). Arg243 is an active-site residue. Residues 264–269 are important for the catalytic mechanism of dephosphorylation; sequence PVKTGR.

This sequence belongs to the HPrK/P family. Homohexamer. Requires Mg(2+) as cofactor.

It catalyses the reaction [HPr protein]-L-serine + ATP = [HPr protein]-O-phospho-L-serine + ADP + H(+). It carries out the reaction [HPr protein]-O-phospho-L-serine + phosphate + H(+) = [HPr protein]-L-serine + diphosphate. In terms of biological role, catalyzes the ATP- as well as the pyrophosphate-dependent phosphorylation of a specific serine residue in HPr, a phosphocarrier protein of the phosphoenolpyruvate-dependent sugar phosphotransferase system (PTS). HprK/P also catalyzes the pyrophosphate-producing, inorganic phosphate-dependent dephosphorylation (phosphorolysis) of seryl-phosphorylated HPr (P-Ser-HPr). The two antagonistic activities of HprK/P are regulated by several intracellular metabolites, which change their concentration in response to the absence or presence of rapidly metabolisable carbon sources (glucose, fructose, etc.) in the growth medium. Therefore, by controlling the phosphorylation state of HPr, HPrK/P is a sensor enzyme that plays a major role in the regulation of carbon metabolism and sugar transport: it mediates carbon catabolite repression (CCR), and regulates PTS-catalyzed carbohydrate uptake and inducer exclusion. The polypeptide is HPr kinase/phosphorylase (Streptococcus equi subsp. equi (strain 4047)).